Here is a 259-residue protein sequence, read N- to C-terminus: Beta-glucanase (259 aa).

A signal peptide spans 1–31 (MVKSKYLVFISVFSLLFGVFVVGFSHQGVKA). In terms of domain architecture, GH16 spans 35-255 (RPMGTAFYES…WVRYTPLQNY (221 aa)). The active-site Nucleophile is Glu-142. Glu-146 (proton donor) is an active-site residue.

The protein belongs to the glycosyl hydrolase 16 family.

The catalysed reaction is Hydrolysis of (1-&gt;4)-beta-D-glucosidic linkages in beta-D-glucans containing (1-&gt;3)- and (1-&gt;4)-bonds.. Hydrolyzes B-glucans containing mixed beta-1,3 and beta-1,4 linkages. The sequence is that of Beta-glucanase (bglBB) from Brevibacillus brevis (Bacillus brevis).